The primary structure comprises 80 residues: Raniseptin-8 (80 aa).

Positions 1 to 22 (MAFLKKSLFLVLFLGIVSLSIC) are cleaved as a signal peptide. Positions 23 to 49 (EEEKREGEEEEKQEEENEELSEEELRE) are excised as a propeptide. Residues 27–46 (REGEEEEKQEEENEELSEEE) are disordered. Residues 30-44 (EEEEKQEEENEELSE) are compositionally biased toward acidic residues.

It belongs to the frog skin active peptide (FSAP) family. Dermaseptin subfamily. Expressed by the skin glands.

Its subcellular location is the secreted. Its function is as follows. Has antibacterial activity. The chain is Raniseptin-8 from Boana raniceps (Chaco tree frog).